We begin with the raw amino-acid sequence, 484 residues long: UDP-N-acetylmuramoyl-L-alanyl-D-glutamate--2,6-diaminopimelate ligase (484 aa).

UDP-N-acetyl-alpha-D-muramoyl-L-alanyl-D-glutamate is bound at residue S29. 108–114 (GTSGKTS) is an ATP binding site. UDP-N-acetyl-alpha-D-muramoyl-L-alanyl-D-glutamate-binding positions include 150-151 (TT), S177, Q183, and R185. Residue K217 is modified to N6-carboxylysine. Meso-2,6-diaminopimelate contacts are provided by residues R381, 405–408 (DNPR), G453, and E457. Residues 405–408 (DNPR) carry the Meso-diaminopimelate recognition motif motif.

Belongs to the MurCDEF family. MurE subfamily. Mg(2+) serves as cofactor. In terms of processing, carboxylation is probably crucial for Mg(2+) binding and, consequently, for the gamma-phosphate positioning of ATP.

It is found in the cytoplasm. It carries out the reaction UDP-N-acetyl-alpha-D-muramoyl-L-alanyl-D-glutamate + meso-2,6-diaminopimelate + ATP = UDP-N-acetyl-alpha-D-muramoyl-L-alanyl-gamma-D-glutamyl-meso-2,6-diaminopimelate + ADP + phosphate + H(+). It participates in cell wall biogenesis; peptidoglycan biosynthesis. Functionally, catalyzes the addition of meso-diaminopimelic acid to the nucleotide precursor UDP-N-acetylmuramoyl-L-alanyl-D-glutamate (UMAG) in the biosynthesis of bacterial cell-wall peptidoglycan. The polypeptide is UDP-N-acetylmuramoyl-L-alanyl-D-glutamate--2,6-diaminopimelate ligase (Mesorhizobium japonicum (strain LMG 29417 / CECT 9101 / MAFF 303099) (Mesorhizobium loti (strain MAFF 303099))).